A 512-amino-acid chain; its full sequence is Putative ribose/galactose/methyl galactoside import ATP-binding protein 1 (512 aa).

2 consecutive ABC transporter domains span residues 14 to 251 (IALT…VGRQ) and 262 to 507 (TSAN…TQRE). ATP is bound at residue 46 to 53 (GENGAGKS).

The protein belongs to the ABC transporter superfamily. Carbohydrate importer 2 (CUT2) (TC 3.A.1.2) family.

The protein resides in the cell inner membrane. It carries out the reaction D-ribose(out) + ATP + H2O = D-ribose(in) + ADP + phosphate + H(+). It catalyses the reaction D-galactose(out) + ATP + H2O = D-galactose(in) + ADP + phosphate + H(+). Functionally, part of an ABC transporter complex involved in carbohydrate import. Could be involved in ribose, galactose and/or methyl galactoside import. Responsible for energy coupling to the transport system. The chain is Putative ribose/galactose/methyl galactoside import ATP-binding protein 1 from Burkholderia lata (strain ATCC 17760 / DSM 23089 / LMG 22485 / NCIMB 9086 / R18194 / 383).